Here is a 234-residue protein sequence, read N- to C-terminus: Transcription factor bHLH160 (234 aa).

Residues 1–13 (MSSQPNHQTSISS) show a composition bias toward polar residues. A disordered region spans residues 1 to 67 (MSSQPNHQTS…GAAKKQDHNA (67 aa)). Residues 27–37 (IVEKESAEKDT) are compositionally biased toward basic and acidic residues. A bHLH domain is found at 60–115 (AKKQDHNAKERLRRMRLHASYLTLGTLLPDHSSSSSKKKWSAPSIIDNVITYIPKL).

Belongs to the bHLH protein family.

The protein localises to the nucleus. The chain is Transcription factor bHLH160 from Arabidopsis thaliana (Mouse-ear cress).